Reading from the N-terminus, the 203-residue chain is Inosine triphosphate pyrophosphatase (203 aa).

13-18 (TGNAKK) lines the ITP pocket. Residue Glu43 participates in Mg(2+) binding. ITP-binding positions include Lys55, 71–72 (DT), Lys88, 147–150 (FGWD), Lys170, and 175–176 (HR).

It belongs to the HAM1 NTPase family. In terms of assembly, homodimer. Mg(2+) is required as a cofactor. It depends on Mn(2+) as a cofactor.

It localises to the cytoplasm. The enzyme catalyses ITP + H2O = IMP + diphosphate + H(+). The catalysed reaction is dITP + H2O = dIMP + diphosphate + H(+). It catalyses the reaction XTP + H2O = XMP + diphosphate + H(+). It carries out the reaction N(6)-hydroxy-dATP + H2O = N(6)-hydroxy-dAMP + diphosphate + H(+). Pyrophosphatase that hydrolyzes the non-canonical purine nucleotides inosine triphosphate (ITP), deoxyinosine triphosphate (dITP) as well as 2'-deoxy-N-6-hydroxylaminopurine triphosphate (dHAPTP) and xanthosine 5'-triphosphate (XTP) to their respective monophosphate derivatives. The enzyme does not distinguish between the deoxy- and ribose forms. Probably excludes non-canonical purines from RNA and DNA precursor pools, thus preventing their incorporation into RNA and DNA and avoiding chromosomal lesions. The sequence is that of Inosine triphosphate pyrophosphatase (itpa) from Danio rerio (Zebrafish).